Reading from the N-terminus, the 142-residue chain is Dromaiocalcin-1 (142 aa).

3 cysteine pairs are disulfide-bonded: cysteine 13-cysteine 24, cysteine 41-cysteine 138, and cysteine 113-cysteine 130. In terms of domain architecture, C-type lectin spans phenylalanine 20–lysine 139.

The protein localises to the secreted. The protein resides in the extracellular space. It localises to the extracellular matrix. The sequence is that of Dromaiocalcin-1 from Dromaius novaehollandiae (Emu).